A 439-amino-acid polypeptide reads, in one-letter code: tRNA-2-methylthio-N(6)-dimethylallyladenosine synthase (439 aa).

The 118-residue stretch at 2–119 (KYIYIKTWGC…LAQMIDKVEK (118 aa)) folds into the MTTase N-terminal domain. Residues Cys11, Cys48, Cys82, Cys156, Cys160, and Cys163 each contribute to the [4Fe-4S] cluster site. The 233-residue stretch at 142–374 (KKTGYTASIS…QNCINKQTMS (233 aa)) folds into the Radical SAM core domain. The region spanning 377–439 (RKMLKSTQSV…HTHSLQGELI (63 aa)) is the TRAM domain.

The protein belongs to the methylthiotransferase family. MiaB subfamily. As to quaternary structure, monomer. It depends on [4Fe-4S] cluster as a cofactor.

It localises to the cytoplasm. The enzyme catalyses N(6)-dimethylallyladenosine(37) in tRNA + (sulfur carrier)-SH + AH2 + 2 S-adenosyl-L-methionine = 2-methylsulfanyl-N(6)-dimethylallyladenosine(37) in tRNA + (sulfur carrier)-H + 5'-deoxyadenosine + L-methionine + A + S-adenosyl-L-homocysteine + 2 H(+). Functionally, catalyzes the methylthiolation of N6-(dimethylallyl)adenosine (i(6)A), leading to the formation of 2-methylthio-N6-(dimethylallyl)adenosine (ms(2)i(6)A) at position 37 in tRNAs that read codons beginning with uridine. The chain is tRNA-2-methylthio-N(6)-dimethylallyladenosine synthase from Buchnera aphidicola subsp. Schizaphis graminum (strain Sg).